A 302-amino-acid polypeptide reads, in one-letter code: Epoxyqueuosine reductase (302 aa).

D128 acts as the Proton donor in catalysis. In terms of domain architecture, 4Fe-4S ferredoxin-type 1 spans 170-202 (LPLQADGPIRDYCGTCTACIDACPTDAITPYEV). C182, C185, C188, C192, C207, C234, C237, and C241 together coordinate [4Fe-4S] cluster. The 4Fe-4S ferredoxin-type 2 domain maps to 221 to 251 (NEFKGKMENWIFGCDICQDVCPWNSFARPHS).

The protein belongs to the QueG family. As to quaternary structure, monomer. The cofactor is cob(II)alamin. [4Fe-4S] cluster serves as cofactor.

It is found in the cytoplasm. It catalyses the reaction epoxyqueuosine(34) in tRNA + AH2 = queuosine(34) in tRNA + A + H2O. The protein operates within tRNA modification; tRNA-queuosine biosynthesis. Catalyzes the conversion of epoxyqueuosine (oQ) to queuosine (Q), which is a hypermodified base found in the wobble positions of tRNA(Asp), tRNA(Asn), tRNA(His) and tRNA(Tyr). The polypeptide is Epoxyqueuosine reductase (Leadbetterella byssophila (strain DSM 17132 / JCM 16389 / KACC 11308 / NBRC 106382 / 4M15)).